The primary structure comprises 226 residues: Leucyl/phenylalanyl-tRNA--protein transferase (226 aa).

It belongs to the L/F-transferase family.

It localises to the cytoplasm. The enzyme catalyses N-terminal L-lysyl-[protein] + L-leucyl-tRNA(Leu) = N-terminal L-leucyl-L-lysyl-[protein] + tRNA(Leu) + H(+). The catalysed reaction is N-terminal L-arginyl-[protein] + L-leucyl-tRNA(Leu) = N-terminal L-leucyl-L-arginyl-[protein] + tRNA(Leu) + H(+). It catalyses the reaction L-phenylalanyl-tRNA(Phe) + an N-terminal L-alpha-aminoacyl-[protein] = an N-terminal L-phenylalanyl-L-alpha-aminoacyl-[protein] + tRNA(Phe). In terms of biological role, functions in the N-end rule pathway of protein degradation where it conjugates Leu, Phe and, less efficiently, Met from aminoacyl-tRNAs to the N-termini of proteins containing an N-terminal arginine or lysine. The sequence is that of Leucyl/phenylalanyl-tRNA--protein transferase from Pseudomonas putida (strain W619).